The chain runs to 105 residues: Protein LBH (105 aa).

The LBH domain occupies 18-104 (MTEVMMNTQP…CEETAKENKE (87 aa)). Phosphoserine is present on Ser-63. Acidic residues predominate over residues 86–96 (LVQEDEQDNCE). The disordered stretch occupies residues 86–105 (LVQEDEQDNCEETAKENKEQ).

This sequence belongs to the LBH family. In terms of tissue distribution, highly expressed in heart, and expressed at low levels in placenta, lung, skeletal muscle, kidney and liver.

Its subcellular location is the nucleus. The protein resides in the cytoplasm. Its function is as follows. Transcriptional activator which may act in mitogen-activated protein kinase signaling pathway. This Homo sapiens (Human) protein is Protein LBH.